Reading from the N-terminus, the 325-residue chain is Glutarate 2-hydroxylase (325 aa).

The Fe cation site is built by His-160, Asp-162, and His-292.

Belongs to the glutarate hydroxylase family. As to quaternary structure, homotetramer. Fe(2+) is required as a cofactor.

It catalyses the reaction glutarate + 2-oxoglutarate + O2 = (S)-2-hydroxyglutarate + succinate + CO2. It functions in the pathway amino-acid degradation. In terms of biological role, acts as an alpha-ketoglutarate-dependent dioxygenase catalyzing hydroxylation of glutarate (GA) to L-2-hydroxyglutarate (L2HG). Functions in a L-lysine degradation pathway that proceeds via cadaverine, glutarate and L-2-hydroxyglutarate. The polypeptide is Glutarate 2-hydroxylase (Escherichia fergusonii (strain ATCC 35469 / DSM 13698 / CCUG 18766 / IAM 14443 / JCM 21226 / LMG 7866 / NBRC 102419 / NCTC 12128 / CDC 0568-73)).